The primary structure comprises 89 residues: Putative sodium channel toxin Ts30 (89 aa).

The signal sequence occupies residues 1–17 (MFKLAIILALLFFGARA). Positions 21-85 (RDGYPILSDG…FGDSGTPECH (65 aa)) constitute an LCN-type CS-alpha/beta domain. 4 disulfide bridges follow: Cys31/Cys84, Cys35/Cys59, Cys44/Cys64, and Cys48/Cys66.

Expressed by the venom gland.

Its subcellular location is the secreted. The polypeptide is Putative sodium channel toxin Ts30 (Tityus serrulatus (Brazilian scorpion)).